The following is a 65-amino-acid chain: UPF0434 protein VFMJ11_A0475 (65 aa).

It belongs to the UPF0434 family.

In Aliivibrio fischeri (strain MJ11) (Vibrio fischeri), this protein is UPF0434 protein VFMJ11_A0475.